Consider the following 376-residue polypeptide: Actin-related protein T1 (376 aa).

It belongs to the actin family.

The protein localises to the cytoplasm. The protein resides in the cytoskeleton. Its subcellular location is the nucleus. It is found in the cytoplasmic vesicle. It localises to the secretory vesicle. The protein localises to the acrosome. Functionally, negatively regulates the Hedgehog (SHH) signaling. Binds to the promoter of the SHH signaling mediator, GLI1, and inhibits its expression. The protein is Actin-related protein T1 (Actrt1) of Rattus norvegicus (Rat).